The following is a 349-amino-acid chain: Heat-inducible transcription repressor HrcA (349 aa).

This sequence belongs to the HrcA family.

Negative regulator of class I heat shock genes (grpE-dnaK-dnaJ and groELS operons). Prevents heat-shock induction of these operons. The sequence is that of Heat-inducible transcription repressor HrcA from Mycoplasmoides gallisepticum (strain R(low / passage 15 / clone 2)) (Mycoplasma gallisepticum).